Consider the following 235-residue polypeptide: Orotidine 5'-phosphate decarboxylase (235 aa).

Substrate contacts are provided by residues Asp-12, Lys-34, 61–70, Thr-116, Arg-177, Gln-186, Gly-206, and Arg-207; that span reads DMKLLDIDNT. The active-site Proton donor is the Lys-63.

The protein belongs to the OMP decarboxylase family. Type 1 subfamily. Homodimer.

The catalysed reaction is orotidine 5'-phosphate + H(+) = UMP + CO2. It participates in pyrimidine metabolism; UMP biosynthesis via de novo pathway; UMP from orotate: step 2/2. Functionally, catalyzes the decarboxylation of orotidine 5'-monophosphate (OMP) to uridine 5'-monophosphate (UMP). The chain is Orotidine 5'-phosphate decarboxylase from Rhizobium etli (strain ATCC 51251 / DSM 11541 / JCM 21823 / NBRC 15573 / CFN 42).